Reading from the N-terminus, the 158-residue chain is Phosphopantetheine adenylyltransferase (158 aa).

Thr-10 lines the substrate pocket. Residues 10–11 (TF) and His-18 contribute to the ATP site. Substrate contacts are provided by Lys-42, Leu-74, and Arg-88. Residues 89-91 (GLR), Glu-99, and 124-130 (NSFISST) each bind ATP.

The protein belongs to the bacterial CoaD family. As to quaternary structure, homohexamer. Requires Mg(2+) as cofactor.

It localises to the cytoplasm. It catalyses the reaction (R)-4'-phosphopantetheine + ATP + H(+) = 3'-dephospho-CoA + diphosphate. It functions in the pathway cofactor biosynthesis; coenzyme A biosynthesis; CoA from (R)-pantothenate: step 4/5. Its function is as follows. Reversibly transfers an adenylyl group from ATP to 4'-phosphopantetheine, yielding dephospho-CoA (dPCoA) and pyrophosphate. The protein is Phosphopantetheine adenylyltransferase of Shewanella sediminis (strain HAW-EB3).